The chain runs to 331 residues: ADP,ATP carrier protein 2, mitochondrial (331 aa).

3 Solcar repeats span residues 29-122, 134-226, and 238-320; these read KNFA…FKRM, KWFG…LKPV, and ASFA…LQIL. 5 helical membrane-spanning segments follow: residues 31 to 58, 99 to 123, 132 to 152, 202 to 223, and 237 to 257; these read FAIDFLMGGVSAAVSKTAAAPIERVKLL, TANVIRYFPTQALNFAFKDYFKRMF, YWKWFGGNLASGGAAGASSLF, FNISCVGIIVYRGLYFGLYDSL, and FASFALGWLITNGAGLASYPI. 2 residues coordinate ADP: Arg104 and Lys116. Position 261 (Arg261) interacts with ADP. The interval 261–266 is important for transport activity; sequence RRRMMM. The short motif at 261-266 is the Nucleotide carrier signature motif element; that stretch reads RRRMMM. A helical transmembrane segment spans residues 297-317; sequence AGANILRAIAGAGVLSGYDQL.

The protein belongs to the mitochondrial carrier (TC 2.A.29) family. As to quaternary structure, monomer.

The protein resides in the mitochondrion inner membrane. It catalyses the reaction ADP(in) + ATP(out) = ADP(out) + ATP(in). The matrix-open state (m-state) is inhibited by the membrane-permeable bongkrekic acid (BKA). The cytoplasmic-open state (c-state) is inhibited by the membrane-impermeable toxic inhibitor carboxyatractyloside (CATR). In terms of biological role, ADP:ATP antiporter that mediates import of ADP into the mitochondrial matrix for ATP synthesis, and export of ATP out to fuel the cell. Cycles between the cytoplasmic-open state (c-state) and the matrix-open state (m-state): operates by the alternating access mechanism with a single substrate-binding site intermittently exposed to either the cytosolic (c-state) or matrix (m-state) side of the inner mitochondrial membrane. This chain is ADP,ATP carrier protein 2, mitochondrial (ANT-G2), found in Triticum aestivum (Wheat).